Reading from the N-terminus, the 476-residue chain is MSTQLQHARDGTVTDAMRRVADREGRDPEVVREAVADGHAVIPANHHHDALDPMIIGRDFATKVNANIGNSDTTGDIDDELEKLHTAVHYGADTVMDLSTGENLDGIRTANIDNSPVPVGTVPIYEAVTRVEDVTDITPDLLIDVVEKQAKQGVDYMTLHAGVLAEHLPLTDDRTTGIVSRGGSILSQWMTEHGEQNPLYTHYDELCEILQAHDVTISLGDGLRPGSVADASDDAQFAELDTLGELTRRAWDHGVQAMVEGPGHVPMDQIRANVDRQQEVCDGAPFYVLGPLVTDIAPGYDHITSAIGATEAARAGAAMLCYVTPKEHLGLPDAEDVRDGMAAYRIAAHAGDVAAGKPGARDWDDALSEARYNFDWNRQFDLALDPERAQAFHDQTLPGDNYKDARFCSMCGVDFCSMRIDQDARDAGDDADDMTELTTETDLSESAAAEVNRPPTGTHDAPAAEQAPSPGDDDDD.

The tract at residues 1–27 (MSTQLQHARDGTVTDAMRRVADREGRD) is disordered. The segment covering 7 to 27 (HARDGTVTDAMRRVADREGRD) has biased composition (basic and acidic residues). Residues N67, M96, Y125, H160, 180 to 182 (SRG), 221 to 224 (DGLR), and E260 each bind substrate. Zn(2+) is bound at residue H264. Y287 lines the substrate pocket. H328 is a Zn(2+) binding site. Positions 408, 411, and 416 each coordinate [4Fe-4S] cluster. Positions 425 to 476 (RDAGDDADDMTELTTETDLSESAAAEVNRPPTGTHDAPAAEQAPSPGDDDDD) are disordered. Low complexity predominate over residues 436–447 (ELTTETDLSESA).

It belongs to the ThiC family. It depends on [4Fe-4S] cluster as a cofactor.

The enzyme catalyses 5-amino-1-(5-phospho-beta-D-ribosyl)imidazole + S-adenosyl-L-methionine = 4-amino-2-methyl-5-(phosphooxymethyl)pyrimidine + CO + 5'-deoxyadenosine + formate + L-methionine + 3 H(+). Its pathway is cofactor biosynthesis; thiamine diphosphate biosynthesis. Functionally, catalyzes the synthesis of the hydroxymethylpyrimidine phosphate (HMP-P) moiety of thiamine from aminoimidazole ribotide (AIR) in a radical S-adenosyl-L-methionine (SAM)-dependent reaction. The chain is Phosphomethylpyrimidine synthase from Halobacterium salinarum (strain ATCC 29341 / DSM 671 / R1).